A 370-amino-acid chain; its full sequence is DNA replication and repair protein RecF (370 aa).

30–37 (GENAQGKT) is a binding site for ATP.

The protein belongs to the RecF family.

Its subcellular location is the cytoplasm. In terms of biological role, the RecF protein is involved in DNA metabolism; it is required for DNA replication and normal SOS inducibility. RecF binds preferentially to single-stranded, linear DNA. It also seems to bind ATP. This chain is DNA replication and repair protein RecF, found in Staphylococcus carnosus (strain TM300).